The chain runs to 327 residues: Serine/threonine-protein phosphatase PP1-beta catalytic subunit (327 aa).

Position 2 is an N-acetylalanine (Ala-2). The Mn(2+) site is built by Asp-63, His-65, Asp-91, and Asn-123. Catalysis depends on His-124, which acts as the Proton donor. Residues His-172 and His-247 each contribute to the Mn(2+) site. Positions 305–327 are disordered; sequence QYGGLNSGRPVTPPRTANPPKKR.

Belongs to the PPP phosphatase family. PP-1 subfamily. Mn(2+) is required as a cofactor.

The protein resides in the cytoplasm. It localises to the nucleus. The enzyme catalyses O-phospho-L-seryl-[protein] + H2O = L-seryl-[protein] + phosphate. It carries out the reaction O-phospho-L-threonyl-[protein] + H2O = L-threonyl-[protein] + phosphate. Its function is as follows. Protein phosphatase that associates with over 200 regulatory proteins to form highly specific holoenzymes which dephosphorylate hundreds of biological targets. Protein phosphatase (PP1) is essential for cell division, it participates in the regulation of glycogen metabolism, muscle contractility and protein synthesis. Involved in regulation of ionic conductances and long-term synaptic plasticity. This Xenopus laevis (African clawed frog) protein is Serine/threonine-protein phosphatase PP1-beta catalytic subunit (ppp1cb).